We begin with the raw amino-acid sequence, 701 residues long: Acetyl-coenzyme A synthetase, cytoplasmic (701 aa).

The disordered stretch occupies residues 1-41 (MGLPEERVRSGSGSRGQEEAGAGGRARSWSPPPEVSRSAHV). An interaction with TFEB region spans residues 1-107 (MGLPEERVRS…GATTNICYNV (107 aa)). Ser-28, Ser-30, and Ser-36 each carry phosphoserine. A CoA-binding site is contributed by 219–222 (RGEK). Phosphoserine is present on residues Ser-263, Ser-265, and Ser-267. Thr-363 is a CoA binding site. Lys-418 is subject to N6-acetyllysine. ATP is bound by residues 439–441 (GEP), 463–468 (DTFWQT), Asp-552, and Arg-567. Residues Ser-575 and Arg-636 each coordinate CoA. The Nuclear localization signal signature appears at 656–668 (KTRSGKIMRRVLR). At Ser-659 the chain carries Phosphoserine; by AMPK. N6-acetyllysine is present on Lys-661.

The protein belongs to the ATP-dependent AMP-binding enzyme family. As to quaternary structure, monomer. Interacts with TFEB. AMPK-mediated phosphorylated form at Ser-659 interacts with KPNA1; this interaction results in nuclear translocation of ACSS2. Interacts with the 'Thr-172' phosphorylated form of PRKAA2. Interacts with CREBBP. Post-translationally, reversibly acetylated at Lys-661. The acetyl-CoA synthase activity is inhibited by acetylation and activated by deacetylation mediated by the deacetylases SIRT1 and SIRT3. In terms of processing, glucose deprivation results in its AMPK-dependent phosphorylation at Ser-659, which leads to exposure of its nuclear localization signal, required for its interaction with KPNA1 and subsequent translocation to the nucleus.

It localises to the cytoplasm. The protein localises to the cytosol. The protein resides in the nucleus. It catalyses the reaction acetate + ATP + CoA = acetyl-CoA + AMP + diphosphate. It carries out the reaction propanoate + ATP + CoA = propanoyl-CoA + AMP + diphosphate. Its activity is regulated as follows. Inhibited by acetylation at Lys-661 and activated by deacetylation mediated by the deacetylases SIRT1 and SIRT3. Its function is as follows. Catalyzes the synthesis of acetyl-CoA from short-chain fatty acids. Acetate is the preferred substrate. Can also utilize propionate with a much lower affinity. Nuclear ACSS2 promotes glucose deprivation-induced lysosomal biogenesis and autophagy, tumor cell survival and brain tumorigenesis. Glucose deprivation results in AMPK-mediated phosphorylation of ACSS2 leading to its translocation to the nucleus where it binds to TFEB and locally produces acetyl-CoA for histone acetylation in the promoter regions of TFEB target genes thereby activating their transcription. The regulation of genes associated with autophagy and lysosomal activity through ACSS2 is important for brain tumorigenesis and tumor survival. Acts as a chromatin-bound transcriptional coactivator that up-regulates histone acetylation and expression of neuronal genes. Can be recruited to the loci of memory-related neuronal genes to maintain a local acetyl-CoA pool, providing the substrate for histone acetylation and promoting the expression of specific genes, which is essential for maintaining long-term spatial memory. This Homo sapiens (Human) protein is Acetyl-coenzyme A synthetase, cytoplasmic (ACSS2).